A 119-amino-acid chain; its full sequence is Large ribosomal subunit protein bL20 (119 aa).

It belongs to the bacterial ribosomal protein bL20 family.

In terms of biological role, binds directly to 23S ribosomal RNA and is necessary for the in vitro assembly process of the 50S ribosomal subunit. It is not involved in the protein synthesizing functions of that subunit. This chain is Large ribosomal subunit protein bL20, found in Alkalilimnicola ehrlichii (strain ATCC BAA-1101 / DSM 17681 / MLHE-1).